The sequence spans 383 residues: Putative protein FAM157A (383 aa).

2 disordered regions span residues 1 to 21 and 177 to 254; these read MGPL…PLPK and ATAR…PLGR.

Belongs to the FAM157 family.

This chain is Putative protein FAM157A (FAM157A), found in Homo sapiens (Human).